The following is a 302-amino-acid chain: Putative peptide permease protein BMEII0861 (302 aa).

Residues 1 to 22 (MRSSIHASRLRKMGQSIPASTG) are disordered. 5 consecutive transmembrane segments (helical) span residues 38-58 (IFGLVLLTPLLFAVLTYPLWL), 101-121 (LLVAVSSVVLSTAIGFLIGAI), 147-167 (IFLLVLASIIGSGIWSTVVVI), 230-250 (ILLEAGLSFLGLGVPPPAASW), and 268-288 (WQWLFPGGALVLAVLAINFIG). Positions 97-288 (GRISLLVAVS…LAVLAINFIG (192 aa)) constitute an ABC transmembrane type-1 domain.

Belongs to the binding-protein-dependent transport system permease family. As to quaternary structure, the complex is composed of two ATP-binding proteins (BMEII0863 and BMEII0864), two transmembrane proteins (BMEII0860 and BMEII0861) and a solute-binding protein (BMEII0859).

It is found in the cell inner membrane. In terms of biological role, probably part of an ABC transporter complex that could be involved in peptide import. Probably responsible for the translocation of the substrate across the membrane. This is Putative peptide permease protein BMEII0861 from Brucella melitensis biotype 1 (strain ATCC 23456 / CCUG 17765 / NCTC 10094 / 16M).